Reading from the N-terminus, the 7603-residue chain is Cysteine repeat modular protein B (7603 aa).

A glycan (N-linked (GlcNAc...) asparagine) is linked at Asn172. A helical transmembrane segment spans residues 223–243; the sequence is LVGFFLVPVFVVFFVLSSDAT. Disordered regions lie at residues 248-275 and 291-323; these read GVGV…SSPG and RDTK…GKGF. The segment covering 263–275 has biased composition (low complexity); sequence SVSSSSRASSSPG. Positions 302–313 are enriched in basic residues; it reads SSRRSARARRRR. Residues Asn329, Asn589, Asn848, Asn1128, Asn1183, and Asn1402 are each glycosylated (N-linked (GlcNAc...) asparagine). The tract at residues 1554 to 1574 is disordered; it reads VLRSRSGPSHPSSVSQPSPSF. Residues 1557–1573 show a composition bias toward low complexity; it reads SRSGPSHPSSVSQPSPS. Asn1622, Asn2578, Asn2664, Asn3094, and Asn3126 each carry an N-linked (GlcNAc...) asparagine glycan. The tract at residues 3316–3445 is disordered; the sequence is SNAVPEADEN…SDLTTSQPED (130 aa). Acidic residues predominate over residues 3321–3340; it reads EADENQVESAEPEQNAEGET. Residues 3342 to 3360 are compositionally biased toward low complexity; the sequence is EQGAEEAGGNAAEPGAESG. 7 N-linked (GlcNAc...) asparagine glycosylation sites follow: Asn3546, Asn4367, Asn4823, Asn4901, Asn5186, Asn5546, and Asn5666. The tract at residues 5758–5799 is disordered; sequence LAESRSDDGTVGDDVDLDDNALSGTTNSGWTTSSSNSERVRK. Over residues 5767 to 5776 the composition is skewed to acidic residues; sequence TVGDDVDLDD. Residues 5780-5794 show a composition bias toward low complexity; it reads SGTTNSGWTTSSSNS. N-linked (GlcNAc...) asparagine glycosylation is found at Asn5806, Asn5876, Asn5998, Asn6055, and Asn6369. The tract at residues 6043-6115 is disordered; it reads GEADHTPADG…EASEAESVSA (73 aa). Residues 6051–6060 are compositionally biased toward polar residues; the sequence is DGSSNSSEDS. Residues 6391–6405 show a composition bias toward basic and acidic residues; the sequence is EFTDTGPAPDDHTDE. Residues 6391–6436 form a disordered region; that stretch reads EFTDTGPAPDDHTDEGGANLDSTGGSGEPSSSAPVDPSGENEGQLL. The segment covering 6410–6423 has biased composition (polar residues); sequence LDSTGGSGEPSSSA. The N-linked (GlcNAc...) asparagine glycan is linked to Asn6453. 8 consecutive transmembrane segments (helical) span residues 6520–6540, 6552–6572, 6578–6598, 6627–6647, 6770–6790, 6831–6851, 6888–6908, and 6912–6932; these read IFIL…ALTI, VLIR…LMPA, LAGW…ALHP, IFVP…CVAT, LILG…GFVA, CVAL…QEIF, GLMV…FEVF, and GAIP…SLFV. Residue Asn7013 is glycosylated (N-linked (GlcNAc...) asparagine). The chain crosses the membrane as a helical span at residues 7017 to 7037; it reads FVAALSDSLSQLVIAWCQFTI. Residue Asn7061 is glycosylated (N-linked (GlcNAc...) asparagine). Positions 7174–7242 form a coiled coil; that stretch reads APQLRKENHA…RGLIESEIDD (69 aa). Residues 7379 to 7603 are disordered; sequence AAPAAGLRSH…LKKPGSPKQE (225 aa). Polar residues predominate over residues 7408 to 7417; it reads LGTNLSTPSA. A glycan (N-linked (GlcNAc...) asparagine) is linked at Asn7411. Composition is skewed to low complexity over residues 7474 to 7496, 7509 to 7541, and 7560 to 7582; these read PTPS…SVTP, SEAP…SSDL, and GEAA…AAQP.

Component of a complex, at least composed of cysteine repeat modular protein A (CRMPa), cysteine repeat modular protein B (CRMPb), micronemal protein 15 (MIC15) and thrombospondin type 1 domain-containing protein (TSP1).

Its subcellular location is the cell membrane. It is found in the endoplasmic reticulum. The protein localises to the golgi apparatus. Required for triggering rhoptry secretion. Plays a role in host cell invasion. This Toxoplasma gondii protein is Cysteine repeat modular protein B.